Reading from the N-terminus, the 449-residue chain is UDP-N-acetylmuramate--L-alanine ligase (449 aa).

Residue 121 to 127 coordinates ATP; sequence GAHGKSS.

The protein belongs to the MurCDEF family.

The protein localises to the cytoplasm. The catalysed reaction is UDP-N-acetyl-alpha-D-muramate + L-alanine + ATP = UDP-N-acetyl-alpha-D-muramoyl-L-alanine + ADP + phosphate + H(+). It participates in cell wall biogenesis; peptidoglycan biosynthesis. In terms of biological role, cell wall formation. The protein is UDP-N-acetylmuramate--L-alanine ligase of Helicobacter pylori (strain J99 / ATCC 700824) (Campylobacter pylori J99).